We begin with the raw amino-acid sequence, 434 residues long: Nicotinate phosphoribosyltransferase (434 aa).

Histidine 242 bears the Phosphohistidine; by autocatalysis mark.

This sequence belongs to the NAPRTase family. Post-translationally, transiently phosphorylated on a His residue during the reaction cycle. Phosphorylation strongly increases the affinity for substrates and increases the rate of nicotinate D-ribonucleotide production. Dephosphorylation regenerates the low-affinity form of the enzyme, leading to product release.

It catalyses the reaction nicotinate + 5-phospho-alpha-D-ribose 1-diphosphate + ATP + H2O = nicotinate beta-D-ribonucleotide + ADP + phosphate + diphosphate. It functions in the pathway cofactor biosynthesis; NAD(+) biosynthesis; nicotinate D-ribonucleotide from nicotinate: step 1/1. In terms of biological role, catalyzes the synthesis of beta-nicotinate D-ribonucleotide from nicotinate and 5-phospho-D-ribose 1-phosphate at the expense of ATP. This chain is Nicotinate phosphoribosyltransferase, found in Sinorhizobium fredii (strain NBRC 101917 / NGR234).